Consider the following 258-residue polypeptide: Large ribosomal subunit protein uL5c (258 aa).

A chloroplast-targeting transit peptide spans 1-38; the sequence is MASTSLLQSTSSSFAGVRFHCRTSAAPRVGLSSFTVKA.

In terms of assembly, component of the chloroplast large ribosomal subunit (LSU). Mature 70S chloroplast ribosomes of higher plants consist of a small (30S) and a large (50S) subunit. The 30S small subunit contains 1 molecule of ribosomal RNA (16S rRNA) and 24 different proteins. The 50S large subunit contains 3 rRNA molecules (23S, 5S and 4.5S rRNA) and 33 different proteins.

Its subcellular location is the plastid. It localises to the chloroplast. In terms of biological role, component of the chloroplast ribosome (chloro-ribosome), a dedicated translation machinery responsible for the synthesis of chloroplast genome-encoded proteins, including proteins of the transcription and translation machinery and components of the photosynthetic apparatus. The chain is Large ribosomal subunit protein uL5c (RPL5) from Spinacia oleracea (Spinach).